The following is a 437-amino-acid chain: MSGIPHDHYEPKTGIEKWLHDRLPIVGLVYDTIMIPTPKNLNWWWIWGIVLAFTLVLQIVTGIVLAMHYTPHVDLAFASVEHIMRDVNGGWAMRYIHANGASLFFLAVYIHIFRGLYYGSYKAPREITWIVGMVIYLLMMGTAFMGYVLPWGQMSFWGATVITGLFGAIPGIGPSIQAWLLGGPAVDNATLNRFFSLHYLLPFVIAALVAIHIWAFHTTGNNNPTGVEVRRTSKADAEKDTLPFWPYFVIKDLFALALVLLGFFAVVAYMPNYLGHPDNYVQANPLSTPAHIVPEWYFLPFYAILRAFAADVWVVILVDGLTFGIVDAKFFGVIAMFGAIAVMALAPWLDTSKVRSGAYRPKFRMWFWFLVLDFVVLTWVGAMPTEYPYDWISLIASTYWFAYFLVILPLLGATEKPEPIPASIEEDFNSHYGNPAE.

The chain crosses the membrane as a helical span at residues 45–65 (WIWGIVLAFTLVLQIVTGIVL). Residues H97 and H111 each coordinate heme b. 9 helical membrane passes run 100–120 (GASLFFLAVYIHIFRGLYYGS), 129–149 (WIVGMVIYLLMMGTAFMGYVL), 156–176 (FWGATVITGLFGAIPGIGPSI), 194–214 (FFSLHYLLPFVIAALVAIHIW), 248–268 (FVIKDLFALALVLLGFFAVVA), 298–318 (FLPFYAILRAFAADVWVVILV), 330–350 (FFGVIAMFGAIAVMALAPWLD), 365–385 (MWFWFLVLDFVVLTWVGAMPT), and 391–411 (WISLIASTYWFAYFLVILPLL). Heme b contacts are provided by H198 and H212.

It belongs to the cytochrome b family. As to quaternary structure, the main subunits of complex b-c1 are: cytochrome b, cytochrome c1 and the Rieske protein. Heme b is required as a cofactor.

It localises to the cell membrane. In terms of biological role, component of the ubiquinol-cytochrome c reductase complex (complex III or cytochrome b-c1 complex), which is a respiratory chain that generates an electrochemical potential coupled to ATP synthesis. This chain is Cytochrome b (petB), found in Rhodobacter capsulatus (strain ATCC BAA-309 / NBRC 16581 / SB1003).